A 429-amino-acid polypeptide reads, in one-letter code: Ribosomal RNA small subunit methyltransferase B (429 aa).

S-adenosyl-L-methionine contacts are provided by residues 254 to 260 (CAAPGGK), Asp-277, Asp-303, and Asp-322. Cys-375 serves as the catalytic Nucleophile.

This sequence belongs to the class I-like SAM-binding methyltransferase superfamily. RsmB/NOP family.

The protein localises to the cytoplasm. It carries out the reaction cytidine(967) in 16S rRNA + S-adenosyl-L-methionine = 5-methylcytidine(967) in 16S rRNA + S-adenosyl-L-homocysteine + H(+). In terms of biological role, specifically methylates the cytosine at position 967 (m5C967) of 16S rRNA. In Escherichia coli (strain SE11), this protein is Ribosomal RNA small subunit methyltransferase B.